Here is a 124-residue protein sequence, read N- to C-terminus: Large ribosomal subunit protein eL33 (124 aa).

Alanine 2 bears the N-acetylalanine mark.

This sequence belongs to the eukaryotic ribosomal protein eL33 family.

This Caenorhabditis elegans protein is Large ribosomal subunit protein eL33.